The chain runs to 547 residues: TBCC domain-containing protein 1 (547 aa).

The 132-residue stretch at 304–435 (PHTHRMVVMS…LEDHMAHTGL (132 aa)) folds into the C-CAP/cofactor C-like domain.

The protein belongs to the TBCC family.

Its subcellular location is the cytoplasm. It localises to the cytoskeleton. It is found in the microtubule organizing center. The protein resides in the centrosome. The protein localises to the spindle pole. Its function is as follows. May play a role in the regulation of centrosome and Golgi apparatus positioning. In Xenopus tropicalis (Western clawed frog), this protein is TBCC domain-containing protein 1 (tbccd1).